An 82-amino-acid chain; its full sequence is MGGISIWQLLIIAVIVVLLFGTKKLRGIGSDLGSAVKGFKKAMSEEESNSAANQKDADFETKNLEQAKTNASAEVKKDKEQA.

A helical membrane pass occupies residues methionine 1–glycine 21.

The protein belongs to the TatA/E family. In terms of assembly, the Tat system comprises two distinct complexes: a TatABC complex, containing multiple copies of TatA, TatB and TatC subunits, and a separate TatA complex, containing only TatA subunits. Substrates initially bind to the TatABC complex, which probably triggers association of the separate TatA complex to form the active translocon.

The protein localises to the cell inner membrane. Functionally, part of the twin-arginine translocation (Tat) system that transports large folded proteins containing a characteristic twin-arginine motif in their signal peptide across membranes. TatA could form the protein-conducting channel of the Tat system. The protein is Sec-independent protein translocase protein TatA of Vibrio cholerae serotype O1 (strain ATCC 39315 / El Tor Inaba N16961).